Consider the following 398-residue polypeptide: Subtilisin-like serine protease EN45_076310 (398 aa).

The N-terminal stretch at 1 to 19 (MGFLKLLSTSLATLAVVNA) is a signal peptide. A propeptide spans 20–115 (GKLLTANDGD…VEPDMVVNAT (96 aa)) (removed in mature form). The 79-residue stretch at 35-113 (SYIVVMNDGV…KYVEPDMVVN (79 aa)) folds into the Inhibitor I9 domain. Asn-113 is a glycosylation site (N-linked (GlcNAc...) asparagine). The tract at residues 124-134 (PSWGLSRISSK) is igE-binding. A Peptidase S8 domain is found at 125–398 (SWGLSRISSK…KLLYNGINAQ (274 aa)). The active-site Charge relay system is the Asp-157. The tract at residues 163-170 (GHADFGGR) is igE-binding. Positions 175-195 (TNTADNDDTDGNGHGTHTAST) are disordered. Residue His-188 is the Charge relay system of the active site. Positions 227–245 (IAGMDWAVKDSKSRGATGK) are igE-binding. Asn-249 carries N-linked (GlcNAc...) asparagine glycosylation. Residues 310 to 318 (SFTNFGSVV) form an igE-binding region. Ser-343 serves as the catalytic Charge relay system.

It belongs to the peptidase S8 family.

It localises to the secreted. Inhibited by phenylmethanesulfonyl fluoride (PMSF) and diethyl pyrocarbonate (DEPC), but not by benzamidine. Its function is as follows. Serine protease that hydrolyzes casein, gelatin and human collagen type IV, but not elastin in vitro. Hydrolyzes OCLN of the human lung epithelial cells at 202-Gln-|-Ser-203 and Gln-211-|-Ile-212. The chain is Subtilisin-like serine protease EN45_076310 from Penicillium chrysogenum (Penicillium notatum).